The following is a 146-amino-acid chain: Ribosome-binding factor A (146 aa).

Positions 113–146 (IRDEREAQEPAQDPAQDSSQDASVEASDAPDKAE) are disordered.

It belongs to the RbfA family. In terms of assembly, monomer. Binds 30S ribosomal subunits, but not 50S ribosomal subunits or 70S ribosomes.

It is found in the cytoplasm. In terms of biological role, one of several proteins that assist in the late maturation steps of the functional core of the 30S ribosomal subunit. Associates with free 30S ribosomal subunits (but not with 30S subunits that are part of 70S ribosomes or polysomes). Required for efficient processing of 16S rRNA. May interact with the 5'-terminal helix region of 16S rRNA. In Gemmatimonas aurantiaca (strain DSM 14586 / JCM 11422 / NBRC 100505 / T-27), this protein is Ribosome-binding factor A.